Here is a 274-residue protein sequence, read N- to C-terminus: NH(3)-dependent NAD(+) synthetase (274 aa).

Position 46–53 (46–53 (GISGGQDS)) interacts with ATP. D52 is a Mg(2+) binding site. Deamido-NAD(+) is bound at residue R140. An ATP-binding site is contributed by T160. E165 serves as a coordination point for Mg(2+). Residues K173 and D180 each contribute to the deamido-NAD(+) site. 2 residues coordinate ATP: K189 and T211. A deamido-NAD(+)-binding site is contributed by 260–261 (HK).

It belongs to the NAD synthetase family. Homodimer.

The catalysed reaction is deamido-NAD(+) + NH4(+) + ATP = AMP + diphosphate + NAD(+) + H(+). The protein operates within cofactor biosynthesis; NAD(+) biosynthesis; NAD(+) from deamido-NAD(+) (ammonia route): step 1/1. In terms of biological role, catalyzes the ATP-dependent amidation of deamido-NAD to form NAD. Uses ammonia as a nitrogen source. The sequence is that of NH(3)-dependent NAD(+) synthetase from Pectobacterium carotovorum subsp. carotovorum (strain PC1).